The chain runs to 155 residues: 6,7-dimethyl-8-ribityllumazine synthase (155 aa).

Residues Trp22, Ser56 to Glu58, and Ala80 to Ile82 each bind 5-amino-6-(D-ribitylamino)uracil. Residue Ala85–Thr86 participates in (2S)-2-hydroxy-3-oxobutyl phosphate binding. Catalysis depends on His88, which acts as the Proton donor. Phe113 contacts 5-amino-6-(D-ribitylamino)uracil. Arg127 lines the (2S)-2-hydroxy-3-oxobutyl phosphate pocket.

Belongs to the DMRL synthase family.

It catalyses the reaction (2S)-2-hydroxy-3-oxobutyl phosphate + 5-amino-6-(D-ribitylamino)uracil = 6,7-dimethyl-8-(1-D-ribityl)lumazine + phosphate + 2 H2O + H(+). Its pathway is cofactor biosynthesis; riboflavin biosynthesis; riboflavin from 2-hydroxy-3-oxobutyl phosphate and 5-amino-6-(D-ribitylamino)uracil: step 1/2. Catalyzes the formation of 6,7-dimethyl-8-ribityllumazine by condensation of 5-amino-6-(D-ribitylamino)uracil with 3,4-dihydroxy-2-butanone 4-phosphate. This is the penultimate step in the biosynthesis of riboflavin. This chain is 6,7-dimethyl-8-ribityllumazine synthase, found in Chloroflexus aurantiacus (strain ATCC 29364 / DSM 637 / Y-400-fl).